Consider the following 464-residue polypeptide: 3-isopropylmalate dehydratase large subunit (464 aa).

3 residues coordinate [4Fe-4S] cluster: cysteine 337, cysteine 397, and cysteine 400.

The protein belongs to the aconitase/IPM isomerase family. LeuC type 1 subfamily. Heterodimer of LeuC and LeuD. Requires [4Fe-4S] cluster as cofactor.

It carries out the reaction (2R,3S)-3-isopropylmalate = (2S)-2-isopropylmalate. It functions in the pathway amino-acid biosynthesis; L-leucine biosynthesis; L-leucine from 3-methyl-2-oxobutanoate: step 2/4. Its function is as follows. Catalyzes the isomerization between 2-isopropylmalate and 3-isopropylmalate, via the formation of 2-isopropylmaleate. The protein is 3-isopropylmalate dehydratase large subunit of Bacillus cytotoxicus (strain DSM 22905 / CIP 110041 / 391-98 / NVH 391-98).